Here is a 37-residue protein sequence, read N- to C-terminus: Diuretic hormone 1 (37 aa).

It belongs to the sauvagine/corticotropin-releasing factor/urotensin I family.

It is found in the secreted. Functionally, stimulates fluid secretion by the Malpighian tubules. Increases cyclic AMP production. This Tenebrio molitor (Yellow mealworm beetle) protein is Diuretic hormone 1.